Consider the following 209-residue polypeptide: Pyridoxal phosphate homeostasis protein (209 aa).

Position 31 is an N6-(pyridoxal phosphate)lysine (Lys31).

The protein belongs to the pyridoxal phosphate-binding protein YggS/PROSC family.

Functionally, pyridoxal 5'-phosphate (PLP)-binding protein, which is involved in PLP homeostasis. In Deinococcus radiodurans (strain ATCC 13939 / DSM 20539 / JCM 16871 / CCUG 27074 / LMG 4051 / NBRC 15346 / NCIMB 9279 / VKM B-1422 / R1), this protein is Pyridoxal phosphate homeostasis protein.